A 450-amino-acid polypeptide reads, in one-letter code: Phosphoglucosamine mutase (450 aa).

Ser103 (phosphoserine intermediate) is an active-site residue. The Mg(2+) site is built by Ser103, Asp243, Asp245, and Asp247. A Phosphoserine modification is found at Ser103.

The protein belongs to the phosphohexose mutase family. It depends on Mg(2+) as a cofactor. Post-translationally, activated by phosphorylation.

It carries out the reaction alpha-D-glucosamine 1-phosphate = D-glucosamine 6-phosphate. In terms of biological role, catalyzes the conversion of glucosamine-6-phosphate to glucosamine-1-phosphate. This Lactobacillus helveticus (strain DPC 4571) protein is Phosphoglucosamine mutase.